A 529-amino-acid polypeptide reads, in one-letter code: Probable bifunctional tRNA threonylcarbamoyladenosine biosynthesis protein (529 aa).

Positions 1-324 (MIVLGLEGTA…FRIDEVDAPW (324 aa)) are kae1. Residues His107, His111, and Tyr128 each contribute to the Fe cation site. Residues 128-132 (YVSGG), Asp160, Gly173, Glu177, and Asn257 contribute to the L-threonylcarbamoyladenylate site. Fe cation is bound at residue Asp285. Positions 329-529 (SRKDYGKAGA…SAIRRRHRYV (201 aa)) constitute a Protein kinase domain. ATP-binding positions include 335-342 (KAGAESRI) and Lys355. Residue Asp447 is the Proton acceptor; for kinase activity of the active site.

It in the N-terminal section; belongs to the KAE1 / TsaD family. This sequence in the C-terminal section; belongs to the protein kinase superfamily. Tyr protein kinase family. BUD32 subfamily. Component of the KEOPS complex that consists of Kae1, Bud32, Cgi121 and Pcc1; the whole complex dimerizes. The cofactor is Fe(2+).

The protein resides in the cytoplasm. It catalyses the reaction L-seryl-[protein] + ATP = O-phospho-L-seryl-[protein] + ADP + H(+). The enzyme catalyses L-threonyl-[protein] + ATP = O-phospho-L-threonyl-[protein] + ADP + H(+). The catalysed reaction is L-threonylcarbamoyladenylate + adenosine(37) in tRNA = N(6)-L-threonylcarbamoyladenosine(37) in tRNA + AMP + H(+). Its function is as follows. Required for the formation of a threonylcarbamoyl group on adenosine at position 37 (t(6)A37) in tRNAs that read codons beginning with adenine. Is a component of the KEOPS complex that is probably involved in the transfer of the threonylcarbamoyl moiety of threonylcarbamoyl-AMP (TC-AMP) to the N6 group of A37. The Kae1 domain likely plays a direct catalytic role in this reaction. The Bud32 domain probably displays kinase activity that regulates Kae1 function. In Thermoplasma acidophilum (strain ATCC 25905 / DSM 1728 / JCM 9062 / NBRC 15155 / AMRC-C165), this protein is Probable bifunctional tRNA threonylcarbamoyladenosine biosynthesis protein.